The chain runs to 493 residues: Tripartite motif-containing protein 5 (493 aa).

Residue Ala-2 is modified to N-acetylalanine. The RING-type zinc finger occupies 15–59 (CPICLELLTQPLSLDCGHSFCQACLTANHEKSMLDKGESSCPVCR). At Ser-86 the chain carries Phosphoserine. The segment at 90–132 (QKVDHCARHGEKLLLFCQEDGKVICWLCERSQEHRGHHTFLTE) adopts a B box-type zinc-finger fold. The Zn(2+) site is built by Cys-95, His-98, Cys-117, and His-123. Residues 131–240 (TEEVAQECQV…LISDLEHRLQ (110 aa)) are a coiled coil. The interval 185 to 198 (FEQLRDILDWEESN) is required for interaction with GABARAP and for autophagy. The B30.2/SPRY domain occupies 281–493 (LKGMLEVFRE…VPMTLCSPSS (213 aa)).

This sequence belongs to the TRIM/RBCC family. As to quaternary structure, can form homodimers and homotrimers. In addition to lower-order dimerization, also exhibits a higher-order multimerization and both low- and high-order multimerizations are essential for its restriction activity. Interacts with BTBD1 and BTBD2. Interacts with PSMC4, PSMC5, PSMD7 and HSPA8/HSC70. Interacts (via B30.2/SPRY domain) with HSPA1A/B. Interacts with PSMC2, MAP3K7/TAK1, TAB2 and TAB3. Interacts with SQSTM1. Interacts with TRIM6 and TRIM34. Interacts with ULK1 (phosphorylated form), GABARAP, GABARAPL1, GABARAPL2, MAP1LC3A, MAP1LC3C and BECN1. Post-translationally, degraded in a proteasome-independent fashion in the absence of viral infection but in a proteasome-dependent fashion following exposure to restriction sensitive virus. In terms of processing, autoubiquitinated in a RING finger- and UBE2D2-dependent manner. Monoubiquitinated by TRIM21. Deubiquitinated by Yersinia YopJ. Ubiquitination may not lead to proteasomal degradation.

It is found in the cytoplasm. The protein localises to the nucleus. It catalyses the reaction S-ubiquitinyl-[E2 ubiquitin-conjugating enzyme]-L-cysteine + [acceptor protein]-L-lysine = [E2 ubiquitin-conjugating enzyme]-L-cysteine + N(6)-ubiquitinyl-[acceptor protein]-L-lysine.. The protein operates within protein modification; protein ubiquitination. Its function is as follows. Capsid-specific restriction factor that prevents infection from non-host-adapted retroviruses. Blocks viral replication early in the life cycle, after viral entry but before reverse transcription. In addition to acting as a capsid-specific restriction factor, also acts as a pattern recognition receptor that activates innate immune signaling in response to the retroviral capsid lattice. Binding to the viral capsid triggers its E3 ubiquitin ligase activity, and in concert with the heterodimeric ubiquitin conjugating enzyme complex UBE2V1-UBE2N (also known as UBC13-UEV1A complex) generates 'Lys-63'-linked polyubiquitin chains, which in turn are catalysts in the autophosphorylation of the MAP3K7/TAK1 complex (includes TAK1, TAB2, and TAB3). Activation of the MAP3K7/TAK1 complex by autophosphorylation results in the induction and expression of NF-kappa-B and MAPK-responsive inflammatory genes, thereby leading to an innate immune response in the infected cell. Plays a role in regulating autophagy through activation of autophagy regulator BECN1 by causing its dissociation from its inhibitors BCL2 and TAB2. The chain is Tripartite motif-containing protein 5 (TRIM5) from Gorilla gorilla gorilla (Western lowland gorilla).